A 1610-amino-acid polypeptide reads, in one-letter code: NHS-like protein 1 (1610 aa).

Serine 24 is subject to Phosphoserine. Positions 145-169 are disordered; that stretch reads SPFCDDYQDEDEETDQKCSLSSSEE. Phosphoserine is present on residues serine 198 and serine 328. Polar residues predominate over residues 433–448; that stretch reads TAQSAGQRESKSSGSS. 2 disordered regions span residues 433–477 and 531–602; these read TAQS…HWNE and PAHP…DAGS. Phosphoserine is present on serine 568. Positions 578–594 are enriched in polar residues; it reads GYSTPTSNMSSCSLDQT. Serine 639 carries the phosphoserine modification. The span at 649–667 shows a compositional bias: polar residues; that stretch reads QKNQGDRSNYQDKSLSRNI. 5 disordered regions span residues 649–693, 715–778, 791–981, 997–1535, and 1566–1610; these read QKNQ…KKSS, SLPG…SVKS, TGMQ…PPPE, PRPA…GEGE, and EGGL…SEES. Residues 715–730 are compositionally biased toward low complexity; the sequence is SLPGKSGSSPSQSPCS. Composition is skewed to polar residues over residues 740 to 760, 767 to 778, and 851 to 865; these read SRSQSTVSAGSSMTSATTPNV, TPSQSDTSSVKS, and SPSSGYSSQSNTPTA. Low complexity predominate over residues 895 to 928; the sequence is SLISSVSISSSSTSLSSSTSTEGSGTMKKLDPAV. Composition is skewed to pro residues over residues 929–946 and 970–981; these read GSPPAPPPPPVPSPPFPC and PHSPVFPPPPPE. Low complexity predominate over residues 1001–1011; it reads LSPILPDSPVS. Positions 1012–1031 are enriched in pro residues; the sequence is LPLPPPLLPSSEPPPAPPLD. Polar residues predominate over residues 1041–1053; the sequence is PFTNSGQPESSRG. Phosphoserine is present on serine 1089. The segment covering 1122–1153 has biased composition (polar residues); it reads SRNSTNEMESESQPASVTSSLPTPAKSSSQGD. Serine 1167 bears the Phosphoserine mark. Low complexity predominate over residues 1180 to 1193; the sequence is PSPSTTPLPDSSPS. Serine 1233 carries the post-translational modification Phosphoserine. Basic and acidic residues-rich tracts occupy residues 1240–1249 and 1373–1383; these read GSVHSREAKE and GRRDSDDDHSR. Residues serine 1386 and serine 1388 each carry the phosphoserine modification. Residue threonine 1392 is modified to Phosphothreonine. Over residues 1405–1422 the composition is skewed to polar residues; the sequence is QVGSIQRSIRKSSTSSDN. The segment covering 1447 to 1460 has biased composition (basic and acidic residues); the sequence is KNTDPRFQRSRSEP. Low complexity-rich tracts occupy residues 1461 to 1474 and 1504 to 1516; these read SPDAPESPSSCSPS and SRTPPSAASSRYS.

Belongs to the NHS family. In terms of tissue distribution, widely expressed. Expressed in adult and fetal brain, fetal eyes, adult lens, kidney, liver and intestine.

The chain is NHS-like protein 1 (NHSL1) from Homo sapiens (Human).